Here is a 344-residue protein sequence, read N- to C-terminus: MSYYETIASRTEPKKQLPWVEKYRPQEIDHIISNRDIILSLKKFIESRTLPHLLFFGPSGSGKTSTIKCCAREIYGKYINYMILELNASNERGIETVRTKIKNFVSSKSSIFLPMGVRDIFKLVILDEIDSMTVEAQGMLRQTIEKNSGTTRFCLICNDIDKINIALQSRCASFRFSPLNELDMHGRLSDICRLEGVKYEKEAINSIIKISKGDMRSAINTLQHVNLVIGGSINTEDVYKISGHCMPEIVTDVFDILFSLNKNKTKSLKKSVNDIITIVTENNITIFNLLEELKNIVMESKFTTSQKIFLIDNFAKTEMYDSVNVDSNNILMILACLFVFVNNV.

Gly-57–Thr-64 is an ATP binding site.

It belongs to the activator 1 small subunits family. RfcS subfamily.

Its function is as follows. Part of the RFC clamp loader complex which loads the PCNA sliding clamp onto DNA. In Acanthamoeba polyphaga mimivirus (APMV), this protein is Putative replication factor C small subunit L499.